Here is a 395-residue protein sequence, read N- to C-terminus: GPI-anchor transamidase (395 aa).

Positions 1–27 (MVGTWFLCRGFTTLAGLLLLPFGSLAA) are cleaved as a signal peptide. Topologically, residues 28 to 368 (SQIEDQAEQF…PKLKDWHPPG (341 aa)) are lumenal. Ca(2+) is bound by residues aspartate 79, isoleucine 82, glutamate 118, and aspartate 120. Residue histidine 164 is the Proton donor of the active site. The active-site Nucleophile; acyl-thioester intermediate is cysteine 206. A protein is bound by residues cysteine 206, serine 232, and serine 234. Residues 231–236 (DSLSHQ) are autoinhibitory loop. Residues cysteine 275 and cysteine 280 are joined by a disulfide bond. Residues 369–385 (GFILGLWALIIMVFFKT) form a helical membrane-spanning segment. Residues 386–395 (YGIKHMKFIF) are Cytoplasmic-facing.

This sequence belongs to the peptidase C13 family. Heteropentamer. Part of the GPI-anchor transamidase complex, consisting of PIGK, PIGT, PIGS, PIGU and GAA1. Interacts with GPAA1. Interacts with PIGT; this interaction, via a disulfide link, stabilizes the expression of GAA1 and PIGK and links them to PIGS. The disulfide bond between PIGK/GPI8 and PIGT is important for normal enzyme activity.

The protein resides in the endoplasmic reticulum membrane. Its pathway is glycolipid biosynthesis; glycosylphosphatidylinositol-anchor biosynthesis. With respect to regulation, in the absence of proproteins substrates, exists in an inactive state with a disrupted catalytic site by an autoinhibitory loop. The binding of proprotein substrates, particularly the CSP region, to GPI-T triggers concerted conformational changes that alleviate the inhibition by the autoinhibitory loop. Meanwhile, proprotein residues near the omega- site induce the formation of a catalytic cleft for catalysis, following which the products are released and GPI-T reverts to the inactive state. Its function is as follows. Catalytic subunit of the glycosylphosphatidylinositol-anchor (GPI-anchor) transamidase (GPI-T) complex that catalyzes the formation of the linkage between a proprotein and a GPI-anchor and participates in GPI anchored protein biosynthesis. Recognizes diverse proproteins at a C-terminal signal peptide (CSP) region that lacks consensus sequence and replaces it with a GPI-anchor via a transamidation reaction. Transamidation catalysis reaction follows a two-phase mechanism. In the acyl-enzyme phase, the carbonyl group of the proproteins's omega-site undergoes a nucleophilic attack forming an enzyme-substrate thioester bond. Followed by a general acid catalysis that allows CSP releasing, regenerating the carbonyl, and forming the acyl-enzyme intermediate. In the GPI-anchor attachment phase, the amino group of the GPI-anchor's ethanolamine phosphate, the one on third mannose (EtNP3), mediates a nucleophilic attack on the carbonyl of the acyl-enzyme intermediate, replacing the CSP, allowing GPI-anchor attachment to the omega-residue, therefore forming the product and freeing the enzyme. The polypeptide is GPI-anchor transamidase (Sus scrofa (Pig)).